Reading from the N-terminus, the 417-residue chain is Neuropeptide FF receptor 2 (417 aa).

Residues 1–45 (MSEKWDSNSSESWNHIWSGNDTQHHWYSDINITYVNYYLHQPQVA) lie on the Extracellular side of the membrane. N-linked (GlcNAc...) asparagine glycosylation is found at Asn8, Asn20, and Asn31. Residues 46-66 (AVFISSYLLIFVLCMVGNTVV) traverse the membrane as a helical segment. Residues 67 to 82 (CFIVIRNRHMHTVTNF) are Cytoplasmic-facing. A helical transmembrane segment spans residues 83–103 (FILNLAISDLLVGIFCMPITL). Residues 104–119 (LDNIIAGWPFGSSMCK) are Extracellular-facing. Cysteines 118 and 206 form a disulfide. The chain crosses the membrane as a helical span at residues 120–140 (ISGLVQGISVAASVFTLVAIA). At 141-160 (VDRFRCVVYPFKPKLTVKTA) the chain is on the cytoplasmic side. Residues 161–181 (FVTIVIIWGLAIAIMTPSAIM) traverse the membrane as a helical segment. The Extracellular portion of the chain corresponds to 182–217 (LHVQEEKYYRVRLSSHNKTSTVYWCREDWPRHEMRR). An N-linked (GlcNAc...) asparagine glycan is attached at Asn198. Residues 218 to 238 (IYTTVLFATIYLAPLSLIVIM) form a helical membrane-spanning segment. Residues 239–274 (YARIGASLFKTAAHCTGKQRPVQWHVSKKKQKVIKM) are Cytoplasmic-facing. Residues 275–295 (LLTVALLFILSWLPLWTLMML) traverse the membrane as a helical segment. Residues 296–310 (SDYTDLSPNKLRIIN) lie on the Extracellular side of the membrane. The chain crosses the membrane as a helical span at residues 311–331 (IYIYPFAHWLAFCNSSVNPII). Residues 332-417 (YGFFNENFRN…MGEATNSTVA (86 aa)) lie on the Cytoplasmic side of the membrane. The disordered stretch occupies residues 382–401 (SQNPGGENLGCGKSADNPTQ).

The protein belongs to the G-protein coupled receptor 1 family.

The protein localises to the cell membrane. Receptor for NPAF (A-18-F-amide) and NPFF (F-8-F-amide) neuropeptides, also known as morphine-modulating peptides. Can also be activated by a variety of naturally occurring or synthetic FMRF-amide like ligands. This receptor mediates its action by association with G proteins that activate a phosphatidylinositol-calcium second messenger system. The chain is Neuropeptide FF receptor 2 (Npffr2) from Mus musculus (Mouse).